The following is a 319-amino-acid chain: Coiled-coil domain-containing protein 149 (319 aa).

Coiled-coil stretches lie at residues 1-199 (MANQ…RKNS) and 259-286 (IQHQRQTNKILGNRVAELEKKLRTLEVS). Residues 298–318 (VSIGFGSMFFLKYLCLWLIAV) traverse the membrane as a helical segment.

Belongs to the CCDC149 family.

Its subcellular location is the membrane. The protein is Coiled-coil domain-containing protein 149 (CCDC149) of Bos taurus (Bovine).